The primary structure comprises 698 residues: Endogenous retrovirus group K member 9 Env polyprotein (698 aa).

The tract at residues methionine 1 to proline 47 is disordered. The N-terminal stretch at methionine 1–serine 89 is a signal peptide. Over residues alanine 10–arginine 20 the composition is skewed to basic residues. The Extracellular segment spans residues leucine 90 to threonine 631. Residues asparagine 100, asparagine 128, asparagine 153, asparagine 273, asparagine 354, asparagine 371, and asparagine 460 are each glycosylated (N-linked (GlcNAc...) asparagine). The interval phenylalanine 465 to valine 485 is fusion peptide. 4 N-linked (GlcNAc...) asparagine glycosylation sites follow: asparagine 506, asparagine 553, asparagine 565, and asparagine 584. A helical membrane pass occupies residues isoleucine 632 to leucine 652. Topologically, residues valine 653–valine 698 are cytoplasmic.

The protein belongs to the beta type-B retroviral envelope protein family. HERV class-II K(HML-2) env subfamily. In terms of assembly, the surface (SU) and transmembrane (TM) proteins form a heterodimer. SU and TM are attached by noncovalent interactions or by a labile interchain disulfide bond. In terms of processing, specific enzymatic cleavages in vivo yield the mature SU and TM proteins.

It localises to the cell membrane. It is found in the virion. Its function is as follows. Retroviral envelope proteins mediate receptor recognition and membrane fusion during early infection. Endogenous envelope proteins may have kept, lost or modified their original function during evolution. This endogenous envelope protein has lost its original fusogenic properties. Functionally, SU mediates receptor recognition. TM anchors the envelope heterodimer to the viral membrane through one transmembrane domain. The other hydrophobic domain, called fusion peptide, mediates fusion of the viral membrane with the target cell membrane. The polypeptide is Endogenous retrovirus group K member 9 Env polyprotein (ERVK-9) (Homo sapiens (Human)).